We begin with the raw amino-acid sequence, 871 residues long: Isoleucine--tRNA ligase (871 aa).

A 'HIGH' region motif is present at residues 57–67 (PYANGNLHMGH). Residue glutamate 554 coordinates L-isoleucyl-5'-AMP. The 'KMSKS' region motif lies at 595-599 (KMSKS). Lysine 598 provides a ligand contact to ATP.

This sequence belongs to the class-I aminoacyl-tRNA synthetase family. IleS type 1 subfamily. As to quaternary structure, monomer.

The protein localises to the cytoplasm. It catalyses the reaction tRNA(Ile) + L-isoleucine + ATP = L-isoleucyl-tRNA(Ile) + AMP + diphosphate. Catalyzes the attachment of isoleucine to tRNA(Ile). As IleRS can inadvertently accommodate and process structurally similar amino acids such as valine, to avoid such errors it has two additional distinct tRNA(Ile)-dependent editing activities. One activity is designated as 'pretransfer' editing and involves the hydrolysis of activated Val-AMP. The other activity is designated 'posttransfer' editing and involves deacylation of mischarged Val-tRNA(Ile). The protein is Isoleucine--tRNA ligase of Staphylococcus epidermidis.